The following is a 278-amino-acid chain: Bicarbonate transport ATP-binding protein CmpD (278 aa).

In terms of domain architecture, ABC transporter spans 21-254 (LIVENVSKIY…RPRDRERIME (234 aa)). ATP is bound at residue 57 to 64 (GHSGCGKS).

The protein belongs to the ABC transporter superfamily. Nitrate/nitrite/cyanate uptake transporter (NitT) (TC 3.A.1.16) family. As to quaternary structure, the complex is composed of two ATP-binding proteins (CmpC and CmpD), a transmembrane protein (CmpB) and a solute-binding protein (CmpA).

It localises to the cell inner membrane. Functionally, part of the ABC transporter complex CmpABCD involved in bicarbonate transport. Responsible for energy coupling to the transport system. This chain is Bicarbonate transport ATP-binding protein CmpD (cmpD), found in Synechococcus elongatus (strain ATCC 33912 / PCC 7942 / FACHB-805) (Anacystis nidulans R2).